A 1425-amino-acid polypeptide reads, in one-letter code: Nephrocystin-4 (1425 aa).

Position 145 is a phosphoserine (Ser-145). The tract at residues 448–554 (FSLSSDGPTE…VSHLEADLSQ (107 aa)) is disordered. Composition is skewed to low complexity over residues 473–484 (PASPSGTPAPAA) and 507–530 (SPLSPALQSSSKPPLQPPDSSQSP). The segment at 822-1425 (LTLANVGHAC…ETFCVKVLYQ (604 aa)) is sufficient for basal bodies localization.

This sequence belongs to the NPHP4 family. In terms of assembly, interacts with NPHP1 and RPGRIP1L/NPHP8; NPHP1, NPHP4 and RPGRIP1L are proposed to form a functional NPHP1-4-8 module localized to cell-cell contacts and the ciliary transition zone; NPHP4 mediates the interaction between NPHP1 and RPGRIP1L. Interacts with IQCB1/NPHP5; the interaction likely requires additional interactors. Interacts with RPGRIP1, CEP164, JADE1, PALS1, INADL, PARD6A, INVS, DVL2. Interacts with INTU; INTU mediates the interaction between NPHP4 and DAAM1. Interacts with JADE1. Interacts with SPATA7. Expressed in the retina (at protein level).

Its subcellular location is the cytoplasm. It localises to the cytoskeleton. The protein resides in the cilium basal body. It is found in the microtubule organizing center. The protein localises to the centrosome. Its subcellular location is the cell junction. It localises to the tight junction. Functionally, involved in the organization of apical junctions; the function is proposed to implicate a NPHP1-4-8 module. Does not seem to be strictly required for ciliogenesis. Required for building functional cilia. Involved in the organization of the subapical actin network in multiciliated epithelial cells. Seems to recruit INT to basal bodies of motile cilia which subsequently interacts with actin-modifying proteins such as DAAM1. In cooperation with INVS may down-regulate the canonical Wnt pathway and promote the Wnt-PCP pathway by regulating expression and subcellular location of disheveled proteins. Stabilizes protein levels of JADE1 and promotes its translocation to the nucleus leading to cooperative inhibition of canonical Wnt signaling. Acts as negative regulator of the hippo pathway by association with LATS1 and modifying LATS1-dependent phosphorylation and localization of WWTR1/TAZ. The polypeptide is Nephrocystin-4 (Nphp4) (Mus musculus (Mouse)).